Consider the following 1364-residue polypeptide: Toxin subunit YenA2 (1364 aa).

Residues Ser1025 to Leu1080 adopt a coiled-coil conformation.

As to quaternary structure, semipurified toxin complex consists of at least YenA1-YenA2-YenB-YenC1-YenC2-Chi1-Chi2. The Yen-TC:K9 subcomplex is about 26 nm tall and 22 nm in diameter with 5-fold symmetry and 5 copies of YenA1, YenA2, Chi1 and Chi2; the chitinase subunits may be solvent accessible on the exterior the complex. The Yen-TC:K9 subcomplex has no insecticidal activity. The native complex with additional YenB, YenC1 and YenC2 subunits is 16 nm taller and is insecticidal; the toxicity-conferring subunits are present at about 1 copy each. In terms of processing, the isolated toxin complex includes 3 peptides starting between residues 768 and 778 of this protein, which might be physiologically relevant.

Its subcellular location is the secreted. Part of an orally active toxin complex (TC) with strong insecticidal effects on larvae of the Coleoptera Costelytra zealandica, Acrossidius tasmania and Adoryphorus couloni and some Lepidoptera larvae. The TC has an endochitinase activity. In Yersinia entomophaga, this protein is Toxin subunit YenA2.